The following is a 346-amino-acid chain: [LysW]-lysine/[LysW]-ornithine hydrolase (346 aa).

A Zn(2+)-binding site is contributed by histidine 68. Residue aspartate 70 is part of the active site. A Zn(2+)-binding site is contributed by aspartate 92. Glutamate 122 serves as the catalytic Proton acceptor. Positions 123, 146, and 317 each coordinate Zn(2+).

Belongs to the peptidase M20A family. LysK subfamily. Requires Zn(2+) as cofactor. The cofactor is Co(2+).

It localises to the cytoplasm. The catalysed reaction is [amino-group carrier protein]-C-terminal-gamma-(L-lysyl)-L-glutamate + H2O = [amino-group carrier protein]-C-terminal-L-glutamate + L-lysine. The enzyme catalyses [amino-group carrier protein]-C-terminal-gamma-(L-ornithyl)-L-glutamate + H2O = [amino-group carrier protein]-C-terminal-L-glutamate + L-ornithine. It participates in amino-acid biosynthesis; L-lysine biosynthesis via AAA pathway; L-lysine from L-alpha-aminoadipate (Thermus route): step 5/5. Its pathway is amino-acid biosynthesis; L-arginine biosynthesis. Catalyzes the release of L-lysine from [LysW]-gamma-L-lysine and the release of L-ornithine from [LysW]-L-ornithine. This Saccharolobus islandicus (strain Y.G.57.14 / Yellowstone #1) (Sulfolobus islandicus) protein is [LysW]-lysine/[LysW]-ornithine hydrolase.